Reading from the N-terminus, the 251-residue chain is Zinc import ATP-binding protein ZnuC (251 aa).

Residues 5-220 (VSLENVSVSF…PEFISMFGPR (216 aa)) enclose the ABC transporter domain. An ATP-binding site is contributed by 37-44 (GPNGAGKS).

The protein belongs to the ABC transporter superfamily. Zinc importer (TC 3.A.1.15.5) family. As to quaternary structure, the complex is composed of two ATP-binding proteins (ZnuC), two transmembrane proteins (ZnuB) and a solute-binding protein (ZnuA).

It localises to the cell inner membrane. The enzyme catalyses Zn(2+)(out) + ATP(in) + H2O(in) = Zn(2+)(in) + ADP(in) + phosphate(in) + H(+)(in). Part of the ABC transporter complex ZnuABC involved in zinc import. Responsible for energy coupling to the transport system. Seems to be important for the virulence. The polypeptide is Zinc import ATP-binding protein ZnuC (Salmonella typhimurium (strain LT2 / SGSC1412 / ATCC 700720)).